The primary structure comprises 501 residues: ATP synthase subunit alpha (501 aa).

ATP is bound at residue 169–176; sequence GDRQTGKT.

The protein belongs to the ATPase alpha/beta chains family. In terms of assembly, F-type ATPases have 2 components, CF(1) - the catalytic core - and CF(0) - the membrane proton channel. CF(1) has five subunits: alpha(3), beta(3), gamma(1), delta(1), epsilon(1). CF(0) has three main subunits: a(1), b(2) and c(9-12). The alpha and beta chains form an alternating ring which encloses part of the gamma chain. CF(1) is attached to CF(0) by a central stalk formed by the gamma and epsilon chains, while a peripheral stalk is formed by the delta and b chains.

The protein localises to the cell membrane. The enzyme catalyses ATP + H2O + 4 H(+)(in) = ADP + phosphate + 5 H(+)(out). Produces ATP from ADP in the presence of a proton gradient across the membrane. The alpha chain is a regulatory subunit. This Desulforamulus reducens (strain ATCC BAA-1160 / DSM 100696 / MI-1) (Desulfotomaculum reducens) protein is ATP synthase subunit alpha.